The primary structure comprises 469 residues: Glutamate--tRNA ligase 1 (469 aa).

The 'HIGH' region signature appears at 8-18 (PSPTGYLHIGG). The tract at residues 117 to 137 (TPRYDGTWRPEPGKELPPVPA) is disordered. A 'KMSKS' region motif is present at residues 240–244 (KLSKR). An ATP-binding site is contributed by K243.

Belongs to the class-I aminoacyl-tRNA synthetase family. Glutamate--tRNA ligase type 1 subfamily. In terms of assembly, monomer.

The protein localises to the cytoplasm. The catalysed reaction is tRNA(Glu) + L-glutamate + ATP = L-glutamyl-tRNA(Glu) + AMP + diphosphate. Its function is as follows. Catalyzes the attachment of glutamate to tRNA(Glu) in a two-step reaction: glutamate is first activated by ATP to form Glu-AMP and then transferred to the acceptor end of tRNA(Glu). This is Glutamate--tRNA ligase 1 from Aliarcobacter butzleri (strain RM4018) (Arcobacter butzleri).